The chain runs to 383 residues: Acetylornithine deacetylase (383 aa).

His80 is a Zn(2+) binding site. The active site involves Asp82. Residue Asp112 participates in Zn(2+) binding. The active site involves Glu144. Zn(2+) is bound by residues Glu145, Glu169, and His355.

The protein belongs to the peptidase M20A family. ArgE subfamily. Homodimer. The cofactor is Zn(2+). It depends on Co(2+) as a cofactor. Glutathione serves as cofactor.

The protein localises to the cytoplasm. It catalyses the reaction N(2)-acetyl-L-ornithine + H2O = L-ornithine + acetate. The protein operates within amino-acid biosynthesis; L-arginine biosynthesis; L-ornithine from N(2)-acetyl-L-ornithine (linear): step 1/1. In terms of biological role, catalyzes the hydrolysis of the amide bond of N(2)-acetylated L-amino acids. Cleaves the acetyl group from N-acetyl-L-ornithine to form L-ornithine, an intermediate in L-arginine biosynthesis pathway, and a branchpoint in the synthesis of polyamines. This is Acetylornithine deacetylase from Salmonella agona (strain SL483).